Consider the following 101-residue polypeptide: Large ribosomal subunit protein uL23 (101 aa).

Belongs to the universal ribosomal protein uL23 family. In terms of assembly, part of the 50S ribosomal subunit. Contacts protein L29, and trigger factor when it is bound to the ribosome.

Functionally, one of the early assembly proteins it binds 23S rRNA. One of the proteins that surrounds the polypeptide exit tunnel on the outside of the ribosome. Forms the main docking site for trigger factor binding to the ribosome. The chain is Large ribosomal subunit protein uL23 from Pseudarthrobacter chlorophenolicus (strain ATCC 700700 / DSM 12829 / CIP 107037 / JCM 12360 / KCTC 9906 / NCIMB 13794 / A6) (Arthrobacter chlorophenolicus).